Reading from the N-terminus, the 458-residue chain is Phosphoglucosamine mutase (458 aa).

Ser-106 serves as the catalytic Phosphoserine intermediate. Ser-106, Asp-247, Asp-249, and Asp-251 together coordinate Mg(2+). At Ser-106 the chain carries Phosphoserine.

This sequence belongs to the phosphohexose mutase family. It depends on Mg(2+) as a cofactor. Activated by phosphorylation.

The enzyme catalyses alpha-D-glucosamine 1-phosphate = D-glucosamine 6-phosphate. In terms of biological role, catalyzes the conversion of glucosamine-6-phosphate to glucosamine-1-phosphate. This is Phosphoglucosamine mutase from Chlamydia trachomatis serovar A (strain ATCC VR-571B / DSM 19440 / HAR-13).